We begin with the raw amino-acid sequence, 1203 residues long: Protein patched homolog 2 (1203 aa).

Residues 1 to 57 lie on the Cytoplasmic side of the membrane; sequence MTRSPPLRELPPSYTPPARTAAPQILAGSLKAPLWLRAYFQGLLFSLGCGIQRHCGK. A helical membrane pass occupies residues 58–78; the sequence is VLFLGLLAFGALALGLRMAII. Topologically, residues 79-392 are extracellular; the sequence is ETNLEQLWVE…LDDILHAFSE (314 aa). Asn-370 carries an N-linked (GlcNAc...) asparagine glycan. The chain crosses the membrane as a helical span at residues 393-413; that stretch reads VSAARVVGGYLLMLAYACVTM. Residues 394-552 enclose the SSD domain; it reads SAARVVGGYL…MLVFPAILSL (159 aa). Residues 414–428 lie on the Cytoplasmic side of the membrane; that stretch reads LRWDCAQSQGSVGLA. The helical transmembrane segment at 429–449 threads the bilayer; the sequence is GVLLVALAVASGLGLCALLGI. The Extracellular segment spans residues 450–457; sequence TFNAATTQ. The chain crosses the membrane as a helical span at residues 458 to 478; sequence VLPFLALGIGVDDVFLLAHAF. The Cytoplasmic segment spans residues 479-501; that stretch reads TEALPGTPLQERMGECLQRTGTS. Residues 502-522 form a helical membrane-spanning segment; that stretch reads VVLTSINNMAAFLMAALVPIP. The Extracellular segment spans residues 523–531; the sequence is ALRAFSLQA. Residues 532 to 552 traverse the membrane as a helical segment; sequence AIVVGCTFVAVMLVFPAILSL. At 553-686 the chain is on the cytoplasmic side; the sequence is DLRRRHCQRL…APLLLQSHAK (134 aa). A helical membrane pass occupies residues 687–707; that stretch reads AIVLVLFGALLGLSLYGATLV. Residues 708 to 963 are Extracellular-facing; the sequence is QDGLALTDVV…WEQYLGLRRC (256 aa). The N-linked (GlcNAc...) asparagine glycan is linked to Asn-812. Residues 964–984 form a helical membrane-spanning segment; sequence FLLAVCILLVCTFLVCALLLL. Residues 985–991 are Cytoplasmic-facing; it reads NPWTAGL. Residues 992–1012 form a helical membrane-spanning segment; sequence IVLVLAMMTVELFGIMGFLGI. Residue Lys-1013 is a topological domain, extracellular. The chain crosses the membrane as a helical span at residues 1014–1034; sequence LSAIPVVILVASVGIGVEFTV. The Cytoplasmic segment spans residues 1035–1064; sequence HVALGFLTTQGSRNLRAAHALEHTFAPVTD. The chain crosses the membrane as a helical span at residues 1065 to 1085; sequence GAISTLLGLLMLAGSHFDFIV. The Extracellular portion of the chain corresponds to 1086-1093; it reads RYFFAALT. Residues 1094 to 1114 form a helical membrane-spanning segment; it reads VLTLLGLLHGLVLLPVLLSIL. At 1115–1203 the chain is on the cytoplasmic side; sequence GPPPEVIQMY…SSRGPGPATG (89 aa). The tract at residues 1171–1203 is disordered; it reads GAYIHPAPDEPPWSPAATSSGNLSSRGPGPATG. A compositionally biased stretch (polar residues) spans 1186–1195; that stretch reads AATSSGNLSS.

This sequence belongs to the patched family.

It is found in the membrane. Functionally, plays a role in the control of cellular growth. May have a role in epidermal development. May act as a receptor for Sonic hedgehog (SHH). The polypeptide is Protein patched homolog 2 (PTCH2) (Homo sapiens (Human)).